We begin with the raw amino-acid sequence, 119 residues long: Phosphoribosyl-AMP cyclohydrolase (119 aa).

Asp-71 provides a ligand contact to Mg(2+). Zn(2+) is bound at residue Cys-72. Residues Asp-73 and Asp-75 each coordinate Mg(2+). 2 residues coordinate Zn(2+): Cys-90 and Cys-97.

Belongs to the PRA-CH family. Homodimer. Mg(2+) is required as a cofactor. Requires Zn(2+) as cofactor.

The protein resides in the cytoplasm. The enzyme catalyses 1-(5-phospho-beta-D-ribosyl)-5'-AMP + H2O = 1-(5-phospho-beta-D-ribosyl)-5-[(5-phospho-beta-D-ribosylamino)methylideneamino]imidazole-4-carboxamide. It participates in amino-acid biosynthesis; L-histidine biosynthesis; L-histidine from 5-phospho-alpha-D-ribose 1-diphosphate: step 3/9. Functionally, catalyzes the hydrolysis of the adenine ring of phosphoribosyl-AMP. The chain is Phosphoribosyl-AMP cyclohydrolase from Brucella abortus (strain 2308).